The chain runs to 153 residues: Cytochrome c-type biogenesis protein CcmE (153 aa).

The Cytoplasmic segment spans residues 1-6 (MNARRR). The helical; Signal-anchor for type II membrane protein transmembrane segment at 7-27 (LWSVLMLILAVGTAATLTIMA) threads the bilayer. At 28–153 (LRHNLTYLYM…LDTPIAETTP (126 aa)) the chain is on the periplasmic side. 2 residues coordinate heme: histidine 121 and tyrosine 125. A compositionally biased stretch (polar residues) spans 131 to 141 (ANKMQPTPTQH). The interval 131 to 153 (ANKMQPTPTQHTHLDTPIAETTP) is disordered.

The protein belongs to the CcmE/CycJ family.

The protein localises to the cell inner membrane. In terms of biological role, heme chaperone required for the biogenesis of c-type cytochromes. Transiently binds heme delivered by CcmC and transfers the heme to apo-cytochromes in a process facilitated by CcmF and CcmH. In Xylella fastidiosa (strain Temecula1 / ATCC 700964), this protein is Cytochrome c-type biogenesis protein CcmE.